The sequence spans 435 residues: Elongation factor 1-alpha (435 aa).

Residues 4 to 229 (KPHLNLIVIG…DQLEIPPKPV (226 aa)) form the tr-type G domain. The segment at 13 to 20 (GHVDHGKS) is G1. Residue 13 to 20 (GHVDHGKS) coordinates GTP. Residue S20 coordinates Mg(2+). Residues 69 to 73 (GVTIN) are G2. The segment at 90–93 (DAPG) is G3. Residues 90–94 (DAPGH) and 152–155 (NKMD) each bind GTP. Residues 152–155 (NKMD) form a G4 region. Positions 193–195 (VAP) are G5.

Belongs to the TRAFAC class translation factor GTPase superfamily. Classic translation factor GTPase family. EF-Tu/EF-1A subfamily.

Its subcellular location is the cytoplasm. The catalysed reaction is GTP + H2O = GDP + phosphate + H(+). Its function is as follows. GTP hydrolase that promotes the GTP-dependent binding of aminoacyl-tRNA to the A-site of ribosomes during protein biosynthesis. In Sulfolobus acidocaldarius (strain ATCC 33909 / DSM 639 / JCM 8929 / NBRC 15157 / NCIMB 11770), this protein is Elongation factor 1-alpha.